We begin with the raw amino-acid sequence, 85 residues long: Putative membrane protein insertion efficiency factor (85 aa).

The protein belongs to the UPF0161 family.

Its subcellular location is the cell membrane. In terms of biological role, could be involved in insertion of integral membrane proteins into the membrane. The protein is Putative membrane protein insertion efficiency factor of Buchnera aphidicola subsp. Baizongia pistaciae (strain Bp).